The following is an 837-amino-acid chain: Dapper homolog 2 (837 aa).

A coiled-coil region spans residues 65-113 (ENVSKEELRLEATLSLLKQQLTRLRRQDVGLKTHLQQLDQQITELKLDV). 5 disordered regions span residues 189–265 (ADES…PKYQ), 424–497 (HGKH…DKSS), 512–564 (GSQR…KQSG), 600–649 (QQIP…HTQR), and 738–782 (EMSD…EDEG). Composition is skewed to polar residues over residues 246 to 265 (VKSSTPCSSPQNPSVDPKYQ) and 432 to 445 (LDLQKNNFPINNTA). Composition is skewed to basic and acidic residues over residues 456–466 (ASEKRSGHFPK), 486–496 (EGSRASCHDKS), and 548–560 (LSREFCTKNRTDL). Residues 741–759 (DYTTNRFGDSESSQGSQTA) show a composition bias toward polar residues. Residues 768–782 (LDEEDLLEEEEEDEG) show a composition bias toward acidic residues. The PDZ-binding signature appears at 834-837 (MTLV).

Belongs to the dapper family. As to quaternary structure, interacts with dvl2.

It is found in the cytoplasm. Its subcellular location is the late endosome. The protein resides in the nucleus. The protein localises to the cell membrane. In terms of biological role, involved in regulation of intracellular signaling pathways during development. Specifically thought to play a role in canonical and/or non-canonical Wnt signaling pathways through interaction with DSH (Dishevelled) family proteins. Positive regulator of the Wnt signaling pathway which acts downstream of wnt1 indicative for non-canonical Wnt signaling. Also negatively regulates the Nodal signaling pathway, possibly by promoting the lysosomal degradation of Nodal receptors. Required for convergent extension movements in gastrulation. The protein is Dapper homolog 2 (dact2) of Danio rerio (Zebrafish).